A 299-amino-acid chain; its full sequence is Protein phosphatase 1 regulatory subunit 3D (299 aa).

The disordered stretch occupies residues 1–22 (MSRGPSSAVLPSALGSRKLGPR). 3 positions are modified to phosphoserine: serine 23, serine 25, and serine 28. Positions 37–94 (EPRACRPPGSPGRAPPPTPAPSGCDPRLRPIILRRARSLPSSPERRQKAAGAPGAACR) are disordered. Positions 44–56 (PGSPGRAPPPTPA) are enriched in pro residues. The segment covering 57 to 67 (PSGCDPRLRPI) has biased composition (low complexity). Position 74 is a phosphoserine (serine 74). Low complexity predominate over residues 85–94 (AAGAPGAACR). The PP1-binding motif signature appears at 101-104 (LRVR). Serine 133 carries the post-translational modification Phosphoserine. In terms of domain architecture, CBM21 spans 169–278 (GERLQRQLVC…NNDHRDYSLT (110 aa)).

In terms of assembly, interacts with PPP1CC catalytic subunit of PP1, and associates with glycogen. Interacts with EPM2A; in the presence of NHLC1/malin the interaction leads to PPP1R3D ubiquitination and autophagic degradation. As to expression, expressed in all tissues tested. High expression in skeletal muscle and heart.

In terms of biological role, seems to act as a glycogen-targeting subunit for PP1. PP1 is essential for cell division, and participates in the regulation of glycogen metabolism, muscle contractility and protein synthesis. The polypeptide is Protein phosphatase 1 regulatory subunit 3D (PPP1R3D) (Homo sapiens (Human)).